We begin with the raw amino-acid sequence, 433 residues long: Alpha-(1,3)-fucosyltransferase fut-1 (433 aa).

Over 1–12 (MTARSIKLFFAR) the chain is Cytoplasmic. Residues 13 to 32 (WKYLMFACCITYLLVIYAPI) form a helical; Signal-anchor for type II membrane protein membrane-spanning segment. The Lumenal segment spans residues 33 to 433 (SKSEQKDWKE…GTLVDSIPLD (401 aa)). N-linked (GlcNAc...) asparagine glycans are attached at residues N194 and N359.

The protein belongs to the glycosyltransferase 10 family. Mg(2+) serves as cofactor. Requires Mn(2+) as cofactor. In terms of processing, N-glycosylated. Glycosylation is important for enzymatic activity. As to expression, expressed in the pharyngeal-intestinal (PI) and anal valves. Expressed in ASG neurons and in one or two neurons in the retrovesicular ganglion and two neurons posterior to the PI valve and PHA and PHB neurons in the tail.

It localises to the golgi apparatus. The protein resides in the golgi stack membrane. It carries out the reaction N(4)-{beta-D-GlcNAc-(1-&gt;2)-alpha-D-Man-(1-&gt;3)-[beta-D-GlcNAc-(1-&gt;2)-alpha-D-Man-(1-&gt;6)]-beta-D-Man-(1-&gt;4)-beta-D-GlcNAc-(1-&gt;4)-beta-D-GlcNAc}-L-asparaginyl-[protein] + GDP-beta-L-fucose = N(4)-{beta-D-GlcNAc-(1-&gt;2)-alpha-D-Man-(1-&gt;3)-[beta-D-GlcNAc-(1-&gt;2)-alpha-D-Man-(1-&gt;6)]-beta-D-Man-(1-&gt;4)-beta-D-GlcNAc-(1-&gt;4)-[alpha-L-Fuc(1-&gt;3)]-beta-D-GlcNAc}-L-asparaginyl-[protein] + GDP + H(+). It functions in the pathway protein modification; protein glycosylation. Inhibited by Cu(2+) or Zn(2+) and to a lesser extent Ni(2+) ions. In terms of biological role, preferentially catalyzes the addition of fucose in alpha 1-3 linkage to the first GlcNAc residue (with or without alpha 1,6-linked fucose), next to the peptide chains in N-glycans. Unlike in mammals, does not require the prior action of N-acetylglucosaminyltransferase I to generate complex N-glycans. The chain is Alpha-(1,3)-fucosyltransferase fut-1 from Caenorhabditis elegans.